Here is a 282-residue protein sequence, read N- to C-terminus: 4-diphosphocytidyl-2-C-methyl-D-erythritol kinase (282 aa).

Lysine 9 is an active-site residue. 98–108 provides a ligand contact to ATP; sequence PMGGGLGGGSS. Aspartate 140 is a catalytic residue.

The protein belongs to the GHMP kinase family. IspE subfamily. Homodimer.

It carries out the reaction 4-CDP-2-C-methyl-D-erythritol + ATP = 4-CDP-2-C-methyl-D-erythritol 2-phosphate + ADP + H(+). It participates in isoprenoid biosynthesis; isopentenyl diphosphate biosynthesis via DXP pathway; isopentenyl diphosphate from 1-deoxy-D-xylulose 5-phosphate: step 3/6. In terms of biological role, catalyzes the phosphorylation of the position 2 hydroxy group of 4-diphosphocytidyl-2C-methyl-D-erythritol. The chain is 4-diphosphocytidyl-2-C-methyl-D-erythritol kinase from Salmonella heidelberg (strain SL476).